Consider the following 321-residue polypeptide: D-alanine--D-alanine ligase (321 aa).

Positions 121–315 constitute an ATP-grasp domain; it reads RSWFLTNNIN…FTNLIEEIIK (195 aa). An ATP-binding site is contributed by 147-199; sequence PMKRPYVIKPLTQGSSIGVEVIFAEDNFNFADYDFPYGDQVIIEQYIKGRELQ. Residues Glu-268, Glu-282, and Asn-284 each coordinate Mg(2+).

Belongs to the D-alanine--D-alanine ligase family. Mg(2+) serves as cofactor. Requires Mn(2+) as cofactor.

The protein localises to the cytoplasm. The enzyme catalyses 2 D-alanine + ATP = D-alanyl-D-alanine + ADP + phosphate + H(+). It participates in cell wall biogenesis; peptidoglycan biosynthesis. Its function is as follows. Cell wall formation. The polypeptide is D-alanine--D-alanine ligase (Rickettsia massiliae (strain Mtu5)).